A 538-amino-acid polypeptide reads, in one-letter code: Bifunctional purine biosynthesis protein PurH (538 aa).

The MGS-like domain maps to 8 to 158 (IPAPDKVKIR…KNHAYVTVVT (151 aa)).

This sequence belongs to the PurH family.

The enzyme catalyses (6R)-10-formyltetrahydrofolate + 5-amino-1-(5-phospho-beta-D-ribosyl)imidazole-4-carboxamide = 5-formamido-1-(5-phospho-D-ribosyl)imidazole-4-carboxamide + (6S)-5,6,7,8-tetrahydrofolate. It carries out the reaction IMP + H2O = 5-formamido-1-(5-phospho-D-ribosyl)imidazole-4-carboxamide. The protein operates within purine metabolism; IMP biosynthesis via de novo pathway; 5-formamido-1-(5-phospho-D-ribosyl)imidazole-4-carboxamide from 5-amino-1-(5-phospho-D-ribosyl)imidazole-4-carboxamide (10-formyl THF route): step 1/1. Its pathway is purine metabolism; IMP biosynthesis via de novo pathway; IMP from 5-formamido-1-(5-phospho-D-ribosyl)imidazole-4-carboxamide: step 1/1. This chain is Bifunctional purine biosynthesis protein PurH, found in Agrobacterium fabrum (strain C58 / ATCC 33970) (Agrobacterium tumefaciens (strain C58)).